A 381-amino-acid polypeptide reads, in one-letter code: Chorismate synthase (381 aa).

NADP(+) is bound by residues R41 and R47. FMN is bound by residues 127–129 (RAS), 247–248 (QA), G291, 306–310 (KPIPT), and R332.

Belongs to the chorismate synthase family. Homotetramer. FMNH2 serves as cofactor.

It catalyses the reaction 5-O-(1-carboxyvinyl)-3-phosphoshikimate = chorismate + phosphate. Its pathway is metabolic intermediate biosynthesis; chorismate biosynthesis; chorismate from D-erythrose 4-phosphate and phosphoenolpyruvate: step 7/7. Its function is as follows. Catalyzes the anti-1,4-elimination of the C-3 phosphate and the C-6 proR hydrogen from 5-enolpyruvylshikimate-3-phosphate (EPSP) to yield chorismate, which is the branch point compound that serves as the starting substrate for the three terminal pathways of aromatic amino acid biosynthesis. This reaction introduces a second double bond into the aromatic ring system. The protein is Chorismate synthase of Anaeromyxobacter dehalogenans (strain 2CP-1 / ATCC BAA-258).